The chain runs to 301 residues: NAD kinase (301 aa).

The active-site Proton acceptor is D81. NAD(+)-binding positions include 81–82 (DG), 155–156 (NE), H166, R183, D185, 196–201 (TAYSLS), and Q256.

This sequence belongs to the NAD kinase family. A divalent metal cation is required as a cofactor.

The protein localises to the cytoplasm. The catalysed reaction is NAD(+) + ATP = ADP + NADP(+) + H(+). Functionally, involved in the regulation of the intracellular balance of NAD and NADP, and is a key enzyme in the biosynthesis of NADP. Catalyzes specifically the phosphorylation on 2'-hydroxyl of the adenosine moiety of NAD to yield NADP. The polypeptide is NAD kinase (Mannheimia succiniciproducens (strain KCTC 0769BP / MBEL55E)).